Consider the following 330-residue polypeptide: Ketol-acid reductoisomerase (NADP(+)) (330 aa).

The region spanning 1–182 (MKKVYYDQDA…GCTRAGVFET (182 aa)) is the KARI N-terminal Rossmann domain. NADP(+) is bound by residues 25-28 (YGSQ), Ser-51, Ser-53, and 83-86 (DQIQ). His-108 is an active-site residue. Gly-134 serves as a coordination point for NADP(+). The region spanning 183-328 (TFKEETETDL…AELRQMMPWL (146 aa)) is the KARI C-terminal knotted domain. Mg(2+) contacts are provided by Asp-191, Glu-195, Glu-227, and Glu-231. Substrate is bound at residue Ser-252.

The protein belongs to the ketol-acid reductoisomerase family. Mg(2+) is required as a cofactor.

It carries out the reaction (2R)-2,3-dihydroxy-3-methylbutanoate + NADP(+) = (2S)-2-acetolactate + NADPH + H(+). The enzyme catalyses (2R,3R)-2,3-dihydroxy-3-methylpentanoate + NADP(+) = (S)-2-ethyl-2-hydroxy-3-oxobutanoate + NADPH + H(+). It participates in amino-acid biosynthesis; L-isoleucine biosynthesis; L-isoleucine from 2-oxobutanoate: step 2/4. It functions in the pathway amino-acid biosynthesis; L-valine biosynthesis; L-valine from pyruvate: step 2/4. Functionally, involved in the biosynthesis of branched-chain amino acids (BCAA). Catalyzes an alkyl-migration followed by a ketol-acid reduction of (S)-2-acetolactate (S2AL) to yield (R)-2,3-dihydroxy-isovalerate. In the isomerase reaction, S2AL is rearranged via a Mg-dependent methyl migration to produce 3-hydroxy-3-methyl-2-ketobutyrate (HMKB). In the reductase reaction, this 2-ketoacid undergoes a metal-dependent reduction by NADPH to yield (R)-2,3-dihydroxy-isovalerate. The sequence is that of Ketol-acid reductoisomerase (NADP(+)) from Carboxydothermus hydrogenoformans (strain ATCC BAA-161 / DSM 6008 / Z-2901).